Consider the following 250-residue polypeptide: Testis-expressed protein 101 (250 aa).

The signal sequence occupies residues methionine 1 to asparagine 25. Asparagine 45, asparagine 110, asparagine 134, and asparagine 160 each carry an N-linked (GlcNAc...) asparagine glycan. Positions cysteine 141–phenylalanine 215 constitute a UPAR/Ly6 domain. A lipid anchor (GPI-anchor amidated glycine) is attached at glycine 224. A propeptide spans alanine 225–proline 250 (removed in mature form).

In terms of assembly, interacts with VAMP3. Interacts with LY6K. Interacts with DPEP3; co-localized on the cell surface of spermatocytes, spermatids, and testicular spermatozoa, co-localized only in cytoplasmic droplets of caput and corpus epididymal sperm. Interacts with ADAM3; co-localized on sperm surface. Interacts with ADAM5. N-glycosylated; by high mannose and/or biantennary complex and/or certain types of hybrid oligosaccharides; possesses different oligosaccharides chains according to its subcellular localization in the testis. Post-translationally, sheds from membrane raft by ACE and released from the cell surface of epididymal sperm while it passes through the caput epididymis leading to disappearance of TEX101 on spermatozoa; is essential to produce fertile spermatozoa. Detected in testis and ovary. Expressed in spermatocytes, spermatids and testicular spermatozoa, but not in spermatogonia or interstitial cells. Expressed abundantly in testicular germ cells (TGCs) but mostly disappeared from epididymal spermatozoa.

It is found in the cell membrane. It localises to the membrane raft. The protein localises to the cytoplasmic vesicle. The protein resides in the secretory vesicle. Its subcellular location is the acrosome. It is found in the secreted. Its function is as follows. Plays a role in fertilization by controlling binding of sperm to zona pellucida and migration of spermatozoa into the oviduct probably through molecule adhesion ADAM3. May play a role in signal transduction and promote protein tyrosine phosphorylation. In Mus musculus (Mouse), this protein is Testis-expressed protein 101.